The chain runs to 243 residues: Pyridoxine 5'-phosphate synthase (243 aa).

A 3-amino-2-oxopropyl phosphate-binding site is contributed by asparagine 9. Position 11 to 12 (11 to 12 (DH)) interacts with 1-deoxy-D-xylulose 5-phosphate. 3-amino-2-oxopropyl phosphate is bound at residue arginine 20. Histidine 45 serves as the catalytic Proton acceptor. Arginine 47 and histidine 52 together coordinate 1-deoxy-D-xylulose 5-phosphate. Glutamate 72 serves as the catalytic Proton acceptor. Threonine 102 is a 1-deoxy-D-xylulose 5-phosphate binding site. Residue histidine 193 is the Proton donor of the active site. Residues glycine 194 and 215–216 (GH) each bind 3-amino-2-oxopropyl phosphate.

It belongs to the PNP synthase family. In terms of assembly, homooctamer; tetramer of dimers.

It localises to the cytoplasm. The enzyme catalyses 3-amino-2-oxopropyl phosphate + 1-deoxy-D-xylulose 5-phosphate = pyridoxine 5'-phosphate + phosphate + 2 H2O + H(+). The protein operates within cofactor biosynthesis; pyridoxine 5'-phosphate biosynthesis; pyridoxine 5'-phosphate from D-erythrose 4-phosphate: step 5/5. In terms of biological role, catalyzes the complicated ring closure reaction between the two acyclic compounds 1-deoxy-D-xylulose-5-phosphate (DXP) and 3-amino-2-oxopropyl phosphate (1-amino-acetone-3-phosphate or AAP) to form pyridoxine 5'-phosphate (PNP) and inorganic phosphate. The sequence is that of Pyridoxine 5'-phosphate synthase from Vibrio parahaemolyticus serotype O3:K6 (strain RIMD 2210633).